We begin with the raw amino-acid sequence, 280 residues long: Pantothenate synthetase (280 aa).

30–37 lines the ATP pocket; it reads MGYLHEGH. The active-site Proton donor is H37. Q61 provides a ligand contact to (R)-pantoate. Q61 provides a ligand contact to beta-alanine. 147-150 provides a ligand contact to ATP; it reads GKKD. Q153 is a binding site for (R)-pantoate. ATP contacts are provided by residues V176 and 184–187; that span reads MSSR.

This sequence belongs to the pantothenate synthetase family. Homodimer.

The protein localises to the cytoplasm. The enzyme catalyses (R)-pantoate + beta-alanine + ATP = (R)-pantothenate + AMP + diphosphate + H(+). Its pathway is cofactor biosynthesis; (R)-pantothenate biosynthesis; (R)-pantothenate from (R)-pantoate and beta-alanine: step 1/1. Catalyzes the condensation of pantoate with beta-alanine in an ATP-dependent reaction via a pantoyl-adenylate intermediate. The chain is Pantothenate synthetase from Sulfurihydrogenibium sp. (strain YO3AOP1).